Consider the following 418-residue polypeptide: AP-3 complex subunit mu-2 (418 aa).

An MHD domain is found at 176–417; that stretch reads NNEAYFDVVE…MTKAGKFQVR (242 aa).

Belongs to the adaptor complexes medium subunit family. In terms of assembly, adaptor protein complex 3 (AP-3) is a heterotetramer composed of two large adaptins (delta-type subunit AP3D1 and beta-type subunit AP3B1 or AP3B2), a medium adaptin (mu-type subunit AP3M1 or AP3M2) and a small adaptin (sigma-type subunit APS1 or AP3S2). AP-3 associates with the BLOC-1 complex.

The protein localises to the golgi apparatus. It is found in the cytoplasmic vesicle membrane. Component of the adaptor complexes which link clathrin to receptors in coated vesicles. Clathrin-associated protein complexes are believed to interact with the cytoplasmic tails of membrane proteins, leading to their selection and concentration. Ap47 is a subunit of the plasma membrane adaptor. In concert with the BLOC-1 complex, AP-3 is required to target cargos into vesicles assembled at cell bodies for delivery into neurites and nerve terminals. The sequence is that of AP-3 complex subunit mu-2 (Ap3m2) from Rattus norvegicus (Rat).